We begin with the raw amino-acid sequence, 465 residues long: Cystathionine beta-lyase (465 aa).

K213 bears the N6-(pyridoxal phosphate)lysine mark.

Belongs to the trans-sulfuration enzymes family. Pyridoxal 5'-phosphate is required as a cofactor.

It is found in the cytoplasm. The protein resides in the nucleus. The enzyme catalyses L,L-cystathionine + H2O = L-homocysteine + pyruvate + NH4(+). The catalysed reaction is an S-substituted L-cysteine + H2O = a thiol + pyruvate + NH4(+). It functions in the pathway amino-acid biosynthesis; L-methionine biosynthesis via de novo pathway; L-homocysteine from L-cystathionine: step 1/1. This is Cystathionine beta-lyase (STR3) from Saccharomyces cerevisiae (strain ATCC 204508 / S288c) (Baker's yeast).